Reading from the N-terminus, the 300-residue chain is F-box/LRR-repeat protein 15 (300 aa).

At methionine 1 the chain carries N-acetylmethionine. Residues 19–66 (FLDLPWEDVLLPHVLNRVPLRQLLRLQRVSRAFRSLVQLHLAGLRRFD) form the F-box domain. The interval 113-269 (NPQLRSVALG…ESSLSRLRKR (157 aa)) is interaction with SMURF1. 5 LRR repeats span residues 141–162 (RLQR…RGLA), 167–188 (ALEE…VYLA), 194–215 (GLRS…QELA), 220–241 (ELHH…RTLA), and 246–267 (VLRS…SRLR).

The protein belongs to the FBXL15 family. Part of the SCF (SKP1-CUL1-F-box) E3 ubiquitin-protein ligase complex SCF(FBXL15) composed of CUL1, SKP1, RBX1 and FBXL15.

The protein resides in the cytoplasm. It participates in protein modification; protein ubiquitination. Functionally, substrate recognition component of a SCF (SKP1-CUL1-F-box protein) E3 ubiquitin-protein ligase complex which mediates the ubiquitination and subsequent proteasomal degradation of SMURF1, thereby acting as a positive regulator of the BMP signaling pathway. Required for dorsal/ventral pattern formation and bone mass maintenance. Also mediates ubiquitination of SMURF2 and WWP2. The sequence is that of F-box/LRR-repeat protein 15 (FBXL15) from Homo sapiens (Human).